Reading from the N-terminus, the 313-residue chain is Probable cell division protein WhiA (313 aa).

Residues 278–311 (SLKELGKLLDPPLSKSGVNHRLRRIKSIANEIRG) constitute a DNA-binding region (H-T-H motif).

Belongs to the WhiA family.

Functionally, involved in cell division and chromosome segregation. This is Probable cell division protein WhiA from Halothermothrix orenii (strain H 168 / OCM 544 / DSM 9562).